The sequence spans 1895 residues: Diacylglycerol kinase eta (1895 aa).

A compositionally biased stretch (basic and acidic residues) spans 1-10 (MAHLKLDTLH). The segment at 1 to 37 (MAHLKLDTLHVQRSPRGSRRSSPSSGRSSACSSGSIS) is disordered. The segment covering 20–37 (RSSPSSGRSSACSSGSIS) has biased composition (low complexity). The 94-residue stretch at 82–175 (AIIKEGFLLK…WLGSLKTATA (94 aa)) folds into the PH domain. Phorbol-ester/DAG-type zinc fingers lie at residues 195–245 (HHHW…IANC) and 267–318 (PHQW…AVAC). One can recognise a DAGKc domain in the interval 349 to 485 (GNFSPLLVFV…DRWSIMVFEK (137 aa)). Disordered stretches follow at residues 781–801 (ANIDDAGNRLSPCSDAGENTP), 1012–1053 (TTLC…MARL), 1113–1137 (QHRGGDNDSDYPEHEQTPTNKGANL), and 1172–1191 (PNTILTTSTSPTKKSGHGQD). The segment covering 1113–1128 (QHRGGDNDSDYPEHEQ) has biased composition (basic and acidic residues). A compositionally biased stretch (polar residues) spans 1172–1184 (PNTILTTSTSPTK). Residues 1832 to 1895 (WSVNEVVTWL…LQAIKDLSEN (64 aa)) enclose the SAM domain.

Belongs to the eukaryotic diacylglycerol kinase family.

The protein resides in the cytoplasm. It carries out the reaction a 1,2-diacyl-sn-glycerol + ATP = a 1,2-diacyl-sn-glycero-3-phosphate + ADP + H(+). In terms of biological role, phosphorylates diacylglycerol (DAG) to generate phosphatidic acid (PA). In Drosophila melanogaster (Fruit fly), this protein is Diacylglycerol kinase eta.